A 219-amino-acid chain; its full sequence is Charged multivesicular body protein 5 (219 aa).

The span at 1–10 shows a compositional bias: basic residues; the sequence is MNRFFGKAKP. Residues 1-21 are disordered; sequence MNRFFGKAKPKAPPPSLTDCI. The stretch at 26–179 forms a coiled coil; sequence SRAESIDKKI…LGDELLADED (154 aa). Position 86 is a phosphoserine (serine 86). The interval 188-219 is disordered; that stretch reads SAPAIPEGVPTDTKNKDGVLVDEFGLPQIPAS.

The protein belongs to the SNF7 family. Probable peripherally associated component of the endosomal sorting required for transport complex III (ESCRT-III). ESCRT-III components are thought to multimerize to form a flat lattice on the perimeter membrane of the endosome. Several assembly forms of ESCRT-III may exist that interact and act sequentially. Interacts with VTA1. Interacts with CHMP2A. Interacts with VTA1; the interaction involves soluble CHMP5. Interacts with NOD2. Interacts with BROX. Post-translationally, ISGylated. Isgylation inhibits its interaction with VTA1.

It localises to the cytoplasm. The protein resides in the cytosol. The protein localises to the endosome membrane. It is found in the midbody. Its function is as follows. Probable peripherally associated component of the endosomal sorting required for transport complex III (ESCRT-III) which is involved in multivesicular bodies (MVBs) formation and sorting of endosomal cargo proteins into MVBs. MVBs contain intraluminal vesicles (ILVs) that are generated by invagination and scission from the limiting membrane of the endosome and mostly are delivered to lysosomes enabling degradation of membrane proteins, such as stimulated growth factor receptors, lysosomal enzymes and lipids. The MVB pathway appears to require the sequential function of ESCRT-O, -I,-II and -III complexes. ESCRT-III proteins mostly dissociate from the invaginating membrane before the ILV is released. The ESCRT machinery also functions in topologically equivalent membrane fission events, such as the terminal stages of cytokinesis. ESCRT-III proteins are believed to mediate the necessary vesicle extrusion and/or membrane fission activities, possibly in conjunction with the AAA ATPase VPS4. The polypeptide is Charged multivesicular body protein 5 (Chmp5) (Mus musculus (Mouse)).